Consider the following 88-residue polypeptide: HssA/B-like protein 11 (88 aa).

The protein belongs to the hssA/B family.

The polypeptide is HssA/B-like protein 11 (hssl11) (Dictyostelium discoideum (Social amoeba)).